We begin with the raw amino-acid sequence, 160 residues long: Small ribosomal subunit protein uS9 (160 aa).

Belongs to the universal ribosomal protein uS9 family.

The sequence is that of Small ribosomal subunit protein uS9 from Bradyrhizobium sp. (strain ORS 278).